Consider the following 507-residue polypeptide: MKKGGGRNKGFPQDDESSISLRQLMVNEGLIPSLEDEVKRRGVINQLRKIVVRWVKNVAWQHRLPQNQIDATNATILPYGSYGLGVYGSESDIDALCIGPFFASIAEDFFISLRDMLKSRREVSELHCVKDAKVPLIRFKFDGILVDLPYAQLRVLSIPNNVDVLNPFFLRDIDETSWKILSGVRANKCILQLVPSLELFQSLLRCVKLWAKRRGVYGNLNGFLGGVHMAILAAFVCGYQPNATLSSLLANFFYTFAHWQWPTPVVLLEDTYPSTGAPPGLMPIQLPCGSHQYCNSTITRSTFYKIVAEFLLGHNLTKDYLKLNFSWKDLFELYPYANTYTWFTKIHLSAANQEDLSDWVGWVKSRFRCLLIKIEEVYGICDPNPTEYVETYTKQPNIVFYWGLQLRTINVSDIESVKIDFLKNVNSGSFRGTVGRIQLTLVKASQLPKNGECGSNNRSKKVTKTCWRIREDKQCNNVPVYSKHLPGYVVGYQKMVNREADGMEVKC.

ATP contacts are provided by residues 79–81, 91–94, D147, K208, Y217, and 226–227; these read YGS, SDID, and GV. D92, D94, and D147 together coordinate Mg(2+).

It belongs to the poly(A) polymerase family. In terms of assembly, monomer. Forms a complex with cleavage and polyadenylation specificity factor (CPSF) subunits FIPS5 and CPSF30. The cofactor is Mg(2+). It depends on Mn(2+) as a cofactor. As to expression, expressed in leaves (mostly in petioles and tips), cotyledon, roots (tips, vascular tissue of the radicle, and throughout the root tissue excluding the elongation zone), stems, and flowers (restricted to the stigma and the pollen in mature anthers). Active in the primary and secondary root systems.

The protein localises to the nucleus. The enzyme catalyses RNA(n) + ATP = RNA(n)-3'-adenine ribonucleotide + diphosphate. Its function is as follows. Essential protein. Polymerase that creates the 3'-poly(A) tail of mRNA's. Also required for the endoribonucleolytic cleavage reaction at some polyadenylation sites. May acquire specificity through interaction with a cleavage and polyadenylation specificity factor (CPSF) at its C-terminus. This chain is Nuclear poly(A) polymerase 3, found in Arabidopsis thaliana (Mouse-ear cress).